A 122-amino-acid polypeptide reads, in one-letter code: Large ribosomal subunit protein uL14 (122 aa).

It belongs to the universal ribosomal protein uL14 family. In terms of assembly, part of the 50S ribosomal subunit. Forms a cluster with proteins L3 and L19. In the 70S ribosome, L14 and L19 interact and together make contacts with the 16S rRNA in bridges B5 and B8.

Functionally, binds to 23S rRNA. Forms part of two intersubunit bridges in the 70S ribosome. This chain is Large ribosomal subunit protein uL14, found in Chlamydia caviae (strain ATCC VR-813 / DSM 19441 / 03DC25 / GPIC) (Chlamydophila caviae).